We begin with the raw amino-acid sequence, 139 residues long: Arsenate reductase (139 aa).

Residues Cys-10, Cys-82, and Cys-89 each act as nucleophile in the active site. 2 cysteine pairs are disulfide-bonded: Cys-10–Cys-82 and Cys-82–Cys-89.

It belongs to the low molecular weight phosphotyrosine protein phosphatase family. Thioredoxin-coupled ArsC subfamily. In terms of assembly, monomer.

It is found in the cytoplasm. The enzyme catalyses arsenate + [thioredoxin]-dithiol + H(+) = arsenite + [thioredoxin]-disulfide + H2O. Activity is potassium and sulfate-independent. Functionally, catalyzes the reduction of arsenate [As(V)] to arsenite [As(III)]. In vitro, can dephosphorylate para-nitrophenyl phosphate (pNPP). The chain is Arsenate reductase from Bacillus subtilis (strain 168).